Here is a 67-residue protein sequence, read N- to C-terminus: UPF0434 protein Tcr_0959 (67 aa).

This sequence belongs to the UPF0434 family.

This Hydrogenovibrio crunogenus (strain DSM 25203 / XCL-2) (Thiomicrospira crunogena) protein is UPF0434 protein Tcr_0959.